A 377-amino-acid polypeptide reads, in one-letter code: Palmitoyltransferase PFA4 (377 aa).

Residues 1-9 lie on the Cytoplasmic side of the membrane; that stretch reads MAIKLKNRW. The chain crosses the membrane as a helical span at residues 10–30; it reads LGVAIPAFLVALIGYGSHYFI. Over 31–122 the chain is Lumenal; it reads LSNFLSWNEQ…NCVGHSNFPH (92 aa). One can recognise a DHHC domain in the interval 78 to 128; that stretch reads NYCKKCRVYKPERAHHCKTCNQCVLAMDHHCPWTLNCVGHSNFPHFMRFLF. C108 (S-palmitoyl cysteine intermediate) is an active-site residue. Residues 123–143 form a helical membrane-spanning segment; it reads FMRFLFWVIFSTAYLLFLLIG. The Cytoplasmic portion of the chain corresponds to 144–163; sequence RIYLLWSIRHTAFHHRSTSE. Residues 164 to 184 traverse the membrane as a helical segment; it reads IIFICIMTPMDAFVLLTVSSL. Residues 185–377 are Lumenal-facing; that stretch reads LGRCIYNQCL…SDFGVDTELE (193 aa).

The protein belongs to the DHHC palmitoyltransferase family. PFA4 subfamily.

The protein resides in the endoplasmic reticulum membrane. It catalyses the reaction L-cysteinyl-[protein] + hexadecanoyl-CoA = S-hexadecanoyl-L-cysteinyl-[protein] + CoA. In terms of biological role, mediates the reversible addition of palmitate to target proteins, thereby regulating their membrane association and biological function. This is Palmitoyltransferase PFA4 from Kluyveromyces lactis (strain ATCC 8585 / CBS 2359 / DSM 70799 / NBRC 1267 / NRRL Y-1140 / WM37) (Yeast).